We begin with the raw amino-acid sequence, 212 residues long: Ribonuclease HII (212 aa).

The RNase H type-2 domain occupies 28 to 212 (SIIAGVDEVG…KSFAPIRQVV (185 aa)). Asp34, Glu35, and Asp127 together coordinate a divalent metal cation.

It belongs to the RNase HII family. Mn(2+) is required as a cofactor. It depends on Mg(2+) as a cofactor.

It localises to the cytoplasm. It carries out the reaction Endonucleolytic cleavage to 5'-phosphomonoester.. Its function is as follows. Endonuclease that specifically degrades the RNA of RNA-DNA hybrids. In Chlamydia caviae (strain ATCC VR-813 / DSM 19441 / 03DC25 / GPIC) (Chlamydophila caviae), this protein is Ribonuclease HII.